We begin with the raw amino-acid sequence, 1013 residues long: MADSQDDKLYKAEYAKSGRASCKKCKDNIAKDSLRMAIMVQSPMFDGKVPHWHHFSCFWLRAAVQSPSDISGFTDLRWDDQEKVKTAIESGGATGGKGGQKGAAKGEKTLNDFAVEYAKSNRSTCKGCDQKIEKDQIRVSKKTVDPEKPQLGLIDRWYHTGCFVSRREELIFKPEYSAAQLKGFAVLRDEDKEELKKRLPAVKSEGKRKADEVDGGVSKKQKKEDEKLEQNLKDQSQLIWGIKDKLKKFCSINDMKELLIANSQEVPSGESNIVDRLSDCMAFGSLKPCETCKGQLVFKSDAYYCTGDISAWTKCVFKTQTPDRKDWVTPKEFSEIPFLKKFKFKRQDRVFPKDAPPAAATPSSGSTTSAATSVSSASKNLTEAPADKPLTGMKLLAVGKLSKNKDDLKKFVEDLGGKITGTASKAALCISSKKEIEKMSKKMEEVRDAGVRVVADDFLTDIKESGKALQELISLHAISPWGAEVKVEAPAAAAATKSTGAHSSKSTGKVKEEEGGSKSKKMKLTVKGGAAVDPDSGLENCAHVLEQNGKIYSATLGLVDIVRGTNSYYKLQLLEDDVQKRYWVFRSWGRVGTTIGGNKLDKFYDKNSAMDNFCGVYEEKTGNAWASSNFTKYPNKFYPLEIDYGQDEEAVKKLTQSAGAKSQLEKPVQDLIRMIFDVESMKKAMVEFEIDLQKMPLGKLSKRQIQSAYSLLSEVQQAVADSSSESLILDLSNRFYTLIPHDFGMKKPPLLSNVDYIQQKVQMLDNLLDIEVAYSLLRGGVENNEKDPIDINYEKLKTKIEVVDKSSHEAQLILQYVKNTHAATHNTYTLDVEEIFKIEREGEYQRYRPFKELPNRQLLWHGSRTTNYAGILSQGLRIAPPEAPVTGYMFGKGVYFADMVSKSANYCHTSQADPVGLILLGEVALGNMHELKKASHITKLPKGKHSVKGLGRSAPDPRATVSLNGVDIPLGKGMNTNIDDTSLLYNEYIVYDVSQVNLKYLLKIRFNYQTSLW.

2 PARP-type zinc fingers span residues 10–92 and 113–203; these read YKAE…ESGG and FAVE…PAVK. The Zn(2+) site is built by Cys22, Cys25, His54, Cys57, Cys125, Cys128, His159, and Cys162. The interval 202–228 is disordered; sequence VKSEGKRKADEVDGGVSKKQKKEDEKL. Positions 207–209 match the Nuclear localization signal motif; the sequence is KRK. In terms of domain architecture, PADR1 zinc-binding spans 219-353; the sequence is KKQKKEDEKL…FKRQDRVFPK (135 aa). The segment at 284–326 is zinc ribbon; it reads GSLKPCETCKGQLVFKSDAYYCTGDISAWTKCVFKTQTPDRKD. The Zn(2+) site is built by Cys289, Cys292, Cys305, and Cys315. A disordered region spans residues 353–385; the sequence is KDAPPAAATPSSGSTTSAATSVSSASKNLTEAP. Low complexity predominate over residues 356 to 378; the sequence is PPAAATPSSGSTTSAATSVSSAS. The automodification domain stretch occupies residues 365–523; that stretch reads GSTTSAATSV…EGGSKSKKMK (159 aa). Residues 385–461 enclose the BRCT domain; it reads PADKPLTGMK…RVVADDFLTD (77 aa). A polyADP-ribosyl glutamic acid mark is found at Glu413, Glu435, Glu444, Glu445, Glu464, Glu471, Glu484, and Glu488. Over residues 494–507 the composition is skewed to low complexity; it reads AATKSTGAHSSKST. Positions 494-522 are disordered; that stretch reads AATKSTGAHSSKSTGKVKEEEGGSKSKKM. Glu512 and Glu513 each carry polyADP-ribosyl glutamic acid. Residues 541–637 form the WGR domain; the sequence is CAHVLEQNGK…SNFTKYPNKF (97 aa). The region spanning 661–778 is the PARP alpha-helical domain; sequence KSQLEKPVQD…DIEVAYSLLR (118 aa). One can recognise a PARP catalytic domain in the interval 787 to 1013; that stretch reads DPIDINYEKL…IRFNYQTSLW (227 aa). NAD(+) is bound by residues 861-863, Gly870, Arg877, and Ser903; that span reads HGS. The active-site For poly [ADP-ribose] polymerase activity is the Glu987.

It belongs to the ARTD/PARP family. In terms of assembly, homodimer; PARP-type zinc-fingers from separate parp1 molecules form a dimer module that specifically recognizes DNA strand breaks. Poly-ADP-ribosylated on serine, glutamate and aspartate residues by autocatalysis. Auto-ADP-ribosylation on serine takes place following interaction with HPF1. Auto poly-ADP-ribosylation on serine residues promotes its dissociation from chromatin.

The protein localises to the chromosome. Its subcellular location is the nucleus. It localises to the nucleolus. The protein resides in the cytoplasm. It is found in the cytosol. The enzyme catalyses NAD(+) + (ADP-D-ribosyl)n-acceptor = nicotinamide + (ADP-D-ribosyl)n+1-acceptor + H(+).. It catalyses the reaction L-seryl-[protein] + NAD(+) = O-(ADP-D-ribosyl)-L-seryl-[protein] + nicotinamide + H(+). It carries out the reaction L-aspartyl-[protein] + NAD(+) = 4-O-(ADP-D-ribosyl)-L-aspartyl-[protein] + nicotinamide. The catalysed reaction is L-glutamyl-[protein] + NAD(+) = 5-O-(ADP-D-ribosyl)-L-glutamyl-[protein] + nicotinamide. The enzyme catalyses L-tyrosyl-[protein] + NAD(+) = O-(ADP-D-ribosyl)-L-tyrosyl-[protein] + nicotinamide + H(+). It catalyses the reaction L-histidyl-[protein] + NAD(+) = N(tele)-(ADP-D-ribosyl)-L-histidyl-[protein] + nicotinamide + H(+). ADP-ribosyltransferase activity is regulated via an allosteric activation mechanism. In absence of activation signal, parp1 is autoinhibited by the PARP alpha-helical domain (also named HD region), which prevents effective NAD(+)-binding. Activity is highly stimulated by signals, such as DNA strand breaks. Binding to damaged DNA unfolds the PARP alpha-helical domain, relieving autoinhibition. Poly-ADP-ribosyltransferase activity is tightly regulated and parp1 is removed from damaged chromatin following initial poly-ADP-ribosylation of chromatin to avoid prolonged residence (trapping) that has cytotoxic consequences. A number of factors or post-translational modifications (auto-poly-ADP-ribosylation) promote parp1 removal from chromatin. Its function is as follows. Poly-ADP-ribosyltransferase that mediates poly-ADP-ribosylation of proteins and plays a key role in DNA repair. Mediates glutamate, aspartate, serine, histidine or tyrosine ADP-ribosylation of proteins: the ADP-D-ribosyl group of NAD(+) is transferred to the acceptor carboxyl group of target residues and further ADP-ribosyl groups are transferred to the 2'-position of the terminal adenosine moiety, building up a polymer with an average chain length of 20-30 units. Serine ADP-ribosylation of proteins constitutes the primary form of ADP-ribosylation of proteins in response to DNA damage. Specificity for the different amino acids is conferred by interacting factors, such as hpf1 and nmnat1. Following interaction with hpf1, catalyzes serine ADP-ribosylation of target proteins; hpf1 confers serine specificity by completing the parp1 active site. Also catalyzes tyrosine ADP-ribosylation of target proteins following interaction with hpf1. Following interaction with nmnat1, catalyzes glutamate and aspartate ADP-ribosylation of target proteins; nmnat1 confers glutamate and aspartate specificity. Parp1 initiates the repair of DNA breaks: recognizes and binds DNA breaks within chromatin and recruits hpf1, licensing serine ADP-ribosylation of target proteins, such as histones (H2BS6ADPr and H3S10ADPr), thereby promoting decompaction of chromatin and the recruitment of repair factors leading to the reparation of DNA strand breaks. In addition to base excision repair (BER) pathway, also involved in double-strand breaks (DSBs) repair. Mediates the poly-ADP-ribosylation of a number of proteins. In addition to proteins, also able to ADP-ribosylate DNA: catalyzes ADP-ribosylation of DNA strand break termini containing terminal phosphates and a 2'-OH group in single- and double-stranded DNA, respectively. Parp1-mediated DNA repair in neurons plays a role in sleep: senses DNA damage in neurons and promotes sleep, facilitating efficient DNA repair. In addition to DNA repair, also involved in other processes, such as transcription regulation, programmed cell death, membrane repair, adipogenesis and innate immunity. Acts as a repressor of transcription: binds to nucleosomes and modulates chromatin structure in a manner similar to histone H1, thereby altering RNA polymerase II. Acts both as a positive and negative regulator of transcription elongation, depending on the context. Poly-ADP-ribose chains generated by parp1 also play a role in poly-ADP-ribose-dependent cell death, a process named parthanatos. Also acts as a negative regulator of the cGAS-STING pathway by mediating poly-ADP-ribosylation and inactivation of cgas. Acts as a negative regulator of adipogenesis by catalyzing poly ADP-ribosylation of histone H2B on 'Glu-35' (H2BE35ADPr). In Danio rerio (Zebrafish), this protein is Poly [ADP-ribose] polymerase 1.